Consider the following 506-residue polypeptide: MKIGFNHEKYLEEQSKYILERVNNHDKLYIEFGGKLLADLHAKRVLPGFDENAKIKVLNKLKDKIEVIICVYAGDIERNKIRGDFGITYDMDVFRLIDDLRENDLKVNSVVITRYEDRPSTALFITRLERRGIKVYRHFATKGYPSDVDTIVSDEGYGKNAYIETTKPIVVVTAPGPGSGKLATCLSQLYHEYKRGKDVGYSKFETFPVWNVPLKHPLNIAYEAATVDLNDVNMIDPFHLEEYGEIAVNYNRDIEAFPLLKRIIEKITGKKSIYQSPTDMGVNRVGFGITDDEVVRKASEQEIIRRYFKTGCDYKKGNTDLETFKRSEFIMHSLGLKEEDRKVVTFARKKLELLNQEKDDKNDKQKTLSAIAFEMPDGKIITGKKSSLMDAPSAAILNSLKYLSNFDDELLLISPTILEPIIKLKEKTLKNRYIPLDCEEILIALSITAATNPMAEVALSKLSQLEGVQAHSTHILGRNDEQYLRKLGIDVTSDQVFPTENLYYNQ.

It belongs to the UPF0371 family.

The sequence is that of UPF0371 protein FN1121 from Fusobacterium nucleatum subsp. nucleatum (strain ATCC 25586 / DSM 15643 / BCRC 10681 / CIP 101130 / JCM 8532 / KCTC 2640 / LMG 13131 / VPI 4355).